We begin with the raw amino-acid sequence, 555 residues long: Formate--tetrahydrofolate ligase (555 aa).

Residue 65–72 participates in ATP binding; that stretch reads TPAGEGKT.

Belongs to the formate--tetrahydrofolate ligase family.

The enzyme catalyses (6S)-5,6,7,8-tetrahydrofolate + formate + ATP = (6R)-10-formyltetrahydrofolate + ADP + phosphate. It participates in one-carbon metabolism; tetrahydrofolate interconversion. The protein is Formate--tetrahydrofolate ligase of Caldanaerobacter subterraneus subsp. tengcongensis (strain DSM 15242 / JCM 11007 / NBRC 100824 / MB4) (Thermoanaerobacter tengcongensis).